The primary structure comprises 121 residues: Small ribosomal subunit protein uS13 (121 aa).

A disordered region spans residues 91 to 121 (HRRGLPVRGQNTKNNARTRKGPSKTVAGKKK). Residues 106–121 (ARTRKGPSKTVAGKKK) are compositionally biased toward basic residues.

It belongs to the universal ribosomal protein uS13 family. As to quaternary structure, part of the 30S ribosomal subunit. Forms a loose heterodimer with protein S19. Forms two bridges to the 50S subunit in the 70S ribosome.

Functionally, located at the top of the head of the 30S subunit, it contacts several helices of the 16S rRNA. In the 70S ribosome it contacts the 23S rRNA (bridge B1a) and protein L5 of the 50S subunit (bridge B1b), connecting the 2 subunits; these bridges are implicated in subunit movement. Contacts the tRNAs in the A and P-sites. The polypeptide is Small ribosomal subunit protein uS13 (Listeria monocytogenes serotype 4b (strain CLIP80459)).